The primary structure comprises 448 residues: Acetate kinase (448 aa).

A Mg(2+)-binding site is contributed by N7. Position 14 (K14) interacts with ATP. Residue R91 participates in substrate binding. D148 functions as the Proton donor/acceptor in the catalytic mechanism. Residues 208–212 (HIGNG) and 283–285 (DRR) each bind ATP. E388 serves as a coordination point for Mg(2+).

The protein belongs to the acetokinase family. In terms of assembly, homodimer. It depends on Mg(2+) as a cofactor. Mn(2+) serves as cofactor.

The protein localises to the cytoplasm. It catalyses the reaction acetate + ATP = acetyl phosphate + ADP. It participates in metabolic intermediate biosynthesis; acetyl-CoA biosynthesis; acetyl-CoA from acetate: step 1/2. In terms of biological role, catalyzes the formation of acetyl phosphate from acetate and ATP. Can also catalyze the reverse reaction. This Treponema pallidum (strain Nichols) protein is Acetate kinase.